The following is a 76-amino-acid chain: Exodeoxyribonuclease 7 small subunit (76 aa).

Belongs to the XseB family. As to quaternary structure, heterooligomer composed of large and small subunits.

It is found in the cytoplasm. The catalysed reaction is Exonucleolytic cleavage in either 5'- to 3'- or 3'- to 5'-direction to yield nucleoside 5'-phosphates.. Bidirectionally degrades single-stranded DNA into large acid-insoluble oligonucleotides, which are then degraded further into small acid-soluble oligonucleotides. The sequence is that of Exodeoxyribonuclease 7 small subunit from Latilactobacillus sakei subsp. sakei (strain 23K) (Lactobacillus sakei subsp. sakei).